The primary structure comprises 640 residues: 1-deoxy-D-xylulose-5-phosphate synthase (640 aa).

Thiamine diphosphate-binding positions include His72 and 113-115; that span reads GHA. Asp144 provides a ligand contact to Mg(2+). Residues 145–146, Asn174, Tyr287, and Glu370 contribute to the thiamine diphosphate site; that span reads GA. Mg(2+) is bound at residue Asn174.

The protein belongs to the transketolase family. DXPS subfamily. Homodimer. Requires Mg(2+) as cofactor. The cofactor is thiamine diphosphate.

It catalyses the reaction D-glyceraldehyde 3-phosphate + pyruvate + H(+) = 1-deoxy-D-xylulose 5-phosphate + CO2. Its pathway is metabolic intermediate biosynthesis; 1-deoxy-D-xylulose 5-phosphate biosynthesis; 1-deoxy-D-xylulose 5-phosphate from D-glyceraldehyde 3-phosphate and pyruvate: step 1/1. Catalyzes the acyloin condensation reaction between C atoms 2 and 3 of pyruvate and glyceraldehyde 3-phosphate to yield 1-deoxy-D-xylulose-5-phosphate (DXP). In Synechococcus sp. (strain RCC307), this protein is 1-deoxy-D-xylulose-5-phosphate synthase.